Consider the following 479-residue polypeptide: Glycogen synthase (479 aa).

Position 15 (K15) interacts with ADP-alpha-D-glucose.

This sequence belongs to the glycosyltransferase 1 family. Bacterial/plant glycogen synthase subfamily.

It carries out the reaction [(1-&gt;4)-alpha-D-glucosyl](n) + ADP-alpha-D-glucose = [(1-&gt;4)-alpha-D-glucosyl](n+1) + ADP + H(+). It participates in glycan biosynthesis; glycogen biosynthesis. Its function is as follows. Synthesizes alpha-1,4-glucan chains using ADP-glucose. The polypeptide is Glycogen synthase (Nostoc punctiforme (strain ATCC 29133 / PCC 73102)).